The following is a 238-amino-acid chain: Sugar fermentation stimulation protein homolog (238 aa).

Belongs to the SfsA family.

The polypeptide is Sugar fermentation stimulation protein homolog (Haemophilus influenzae (strain 86-028NP)).